A 213-amino-acid chain; its full sequence is Orotate phosphoribosyltransferase (213 aa).

Lysine 26 contributes to the 5-phospho-alpha-D-ribose 1-diphosphate binding site. 34-35 (FF) provides a ligand contact to orotate. 5-phospho-alpha-D-ribose 1-diphosphate is bound by residues 72-73 (YK), arginine 99, lysine 100, lysine 103, histidine 105, and 124-132 (DDVITAGTA). Residues threonine 128 and arginine 156 each coordinate orotate.

Belongs to the purine/pyrimidine phosphoribosyltransferase family. PyrE subfamily. In terms of assembly, homodimer. Mg(2+) is required as a cofactor.

It carries out the reaction orotidine 5'-phosphate + diphosphate = orotate + 5-phospho-alpha-D-ribose 1-diphosphate. Its pathway is pyrimidine metabolism; UMP biosynthesis via de novo pathway; UMP from orotate: step 1/2. Catalyzes the transfer of a ribosyl phosphate group from 5-phosphoribose 1-diphosphate to orotate, leading to the formation of orotidine monophosphate (OMP). The polypeptide is Orotate phosphoribosyltransferase (Salmonella choleraesuis (strain SC-B67)).